The chain runs to 737 residues: NAD(P)H-quinone oxidoreductase subunit 5, chloroplastic (737 aa).

16 consecutive transmembrane segments (helical) span residues 9 to 29 (WIIP…LILF), 40 to 60 (WAFQ…YLSI), 89 to 109 (IDPL…MVLI), 125 to 145 (FAYM…SNLI), 147 to 167 (IYIF…FWFT), 185 to 205 (GDFG…SFEF), 219 to 239 (NELN…GAVA), 258 to 278 (TPIS…FLVA), 286 to 306 (VIPY…LLGA), 327 to 347 (LGYM…FHLI), 354 to 374 (ALLF…VGYS), 396 to 416 (ITFL…CFWS), 425 to 445 (WLYS…TAFY), 543 to 563 (LFPI…GIPF), 602 to 622 (VVSV…YKPI), and 717 to 737 (SYLF…YLLF).

It belongs to the complex I subunit 5 family. In terms of assembly, NDH is composed of at least 16 different subunits, 5 of which are encoded in the nucleus.

It localises to the plastid. Its subcellular location is the chloroplast thylakoid membrane. The enzyme catalyses a plastoquinone + NADH + (n+1) H(+)(in) = a plastoquinol + NAD(+) + n H(+)(out). The catalysed reaction is a plastoquinone + NADPH + (n+1) H(+)(in) = a plastoquinol + NADP(+) + n H(+)(out). Its function is as follows. NDH shuttles electrons from NAD(P)H:plastoquinone, via FMN and iron-sulfur (Fe-S) centers, to quinones in the photosynthetic chain and possibly in a chloroplast respiratory chain. The immediate electron acceptor for the enzyme in this species is believed to be plastoquinone. Couples the redox reaction to proton translocation, and thus conserves the redox energy in a proton gradient. The protein is NAD(P)H-quinone oxidoreductase subunit 5, chloroplastic (ndhF) of Solanum lycopersicum (Tomato).